The sequence spans 61 residues: uncharacterized protein (61 aa).

The first 30 residues, 1–30, serve as a signal peptide directing secretion; that stretch reads MDVEVANMAAKLRVRGLKLPNAIVVSTAIL.

This is an uncharacterized protein from Archaeoglobus fulgidus (strain ATCC 49558 / DSM 4304 / JCM 9628 / NBRC 100126 / VC-16).